Reading from the N-terminus, the 392-residue chain is Basic salivary proline-rich protein 1 (392 aa).

Residues 1 to 16 form the signal peptide; the sequence is MLLILLSVALLALSSA. Position 17 is a pyrrolidone carboxylic acid (Gln-17). Residues 19–28 are compositionally biased toward polar residues; sequence LNEDVSQEES. A disordered region spans residues 19 to 392; that stretch reads LNEDVSQEES…QGGRPSRPPQ (374 aa). A compositionally biased stretch (low complexity) spans 34-47; the sequence is GNPQGPSPQGGNKP. Ser-40 bears the Phosphoserine; alternate mark. An O-linked (Hex) serine; alternate glycan is attached at Ser-40. A compositionally biased stretch (pro residues) spans 48–83; it reads QGPPPPPGKPQGPPPQGGNKPQGPPPPGKPQGPPPQ. Tandem repeats lie at residues 53 to 72, 73 to 92, 93 to 112, 114 to 133, 134 to 153, 154 to 173, 175 to 194, 195 to 214, 215 to 234, 236 to 255, 256 to 275, 276 to 295, 297 to 316, 317 to 336, and 338 to 357. The 15 X 20 AA approximate tandem repeats of P-P-G-K-P-Q-G-P-P-[PAQ]-Q-[GE]-[GD]-[NKS]-[KSQRN]-[PRQS]-[QS] [GPS]-[PQAR]-[PSR] stretch occupies residues 53–357; that stretch reads PPGKPQGPPP…QEGNNPQGPP (305 aa). Ser-87 is a glycosylation site (O-linked (HexNAc...) serine). Pro residues predominate over residues 91–144; it reads RSPPGKPQGPPPQGGNQPQGPPPPPGKPQGPPPQGGNKPQGPPPPGKPQGPPPQ. Ser-92 carries the post-translational modification Phosphoserine. Ser-150 bears the Phosphoserine; alternate mark. Ser-150 carries an O-linked (Hex) serine; alternate glycan. 4 stretches are compositionally biased toward pro residues: residues 152 to 205, 213 to 243, 252 to 266, and 274 to 324; these read RSPP…PPPQ, RSPP…PQGP, QGPP…PPPQ, and QSPP…PQGP. A compositionally biased stretch (low complexity) spans 325–334; that stretch reads PAQGGSKSQS. Residue Ser-330 is glycosylated (O-linked (HexNAc...) serine). Residues 354 to 392 are compositionally biased toward pro residues; it reads QGPPPPAGGNPQQPQAPPAGQPQGPPRPPQGGRPSRPPQ.

O-glycosylated. O-glycosylation on Ser-87 is prevalent in head and neck cancer patients. O-Glycosylation on Ser-330 has a 5 times prevalence in head and neck cancers. Post-translationally, proteolytically cleaved at the tripeptide Xaa-Pro-Gln, where Xaa in the P(3) position is mostly lysine. The endoprotease may be of microbial origin. In terms of processing, pyroglutamate formation occurs on terminal Gln residues of cleaved peptides. Besides on the N-terminal of mature PBR1, pyroglutamate formation found on at least Gln-58.

The protein localises to the secreted. This Homo sapiens (Human) protein is Basic salivary proline-rich protein 1 (PRB1).